Here is a 226-residue protein sequence, read N- to C-terminus: Protein DVU_0532 (226 aa).

A run of 6 helical transmembrane segments spans residues 1-23, 46-57, 73-99, 112-131, 141-164, and 194-222; these read MYAFLTGPMLWASLLVFFGGLLA, AIGLQGAVQSAL, FFTVAFFLFHIGAVLVPLFLAGHNVIL, MGVADTLTVLAIIGLVMIAL, ILTTGYDWFILAVSAAPFVTGFLA, and LSHIVLFFMSRGQLGMDYAIKRGGATRGP.

Requires heme b as cofactor.

The protein resides in the cell membrane. Functionally, HMWC (high-molecular-weight cytochrome c), ORF2, ORF3, ORF4, ORF5 and ORF6 in the HMC operon form a transmembrane protein complex that allows electron flow from the periplasmic hydrogenase to the cytoplasmic enzymes that catalyze reduction of sulfates. The protein is Protein DVU_0532 of Nitratidesulfovibrio vulgaris (strain ATCC 29579 / DSM 644 / CCUG 34227 / NCIMB 8303 / VKM B-1760 / Hildenborough) (Desulfovibrio vulgaris).